Here is a 449-residue protein sequence, read N- to C-terminus: Exodeoxyribonuclease 7 large subunit (449 aa).

The protein belongs to the XseA family. Heterooligomer composed of large and small subunits.

The protein resides in the cytoplasm. It carries out the reaction Exonucleolytic cleavage in either 5'- to 3'- or 3'- to 5'-direction to yield nucleoside 5'-phosphates.. Functionally, bidirectionally degrades single-stranded DNA into large acid-insoluble oligonucleotides, which are then degraded further into small acid-soluble oligonucleotides. This chain is Exodeoxyribonuclease 7 large subunit, found in Lacticaseibacillus paracasei (strain ATCC 334 / BCRC 17002 / CCUG 31169 / CIP 107868 / KCTC 3260 / NRRL B-441) (Lactobacillus paracasei).